Reading from the N-terminus, the 210-residue chain is Methylthioribulose-1-phosphate dehydratase (210 aa).

Zn(2+)-binding residues include histidine 97 and histidine 99.

This sequence belongs to the aldolase class II family. MtnB subfamily. Homotetramer. Zn(2+) serves as cofactor.

The catalysed reaction is 5-(methylsulfanyl)-D-ribulose 1-phosphate = 5-methylsulfanyl-2,3-dioxopentyl phosphate + H2O. It participates in amino-acid biosynthesis; L-methionine biosynthesis via salvage pathway; L-methionine from S-methyl-5-thio-alpha-D-ribose 1-phosphate: step 2/6. Functionally, catalyzes the dehydration of methylthioribulose-1-phosphate (MTRu-1-P) into 2,3-diketo-5-methylthiopentyl-1-phosphate (DK-MTP-1-P). In Geobacillus kaustophilus (strain HTA426), this protein is Methylthioribulose-1-phosphate dehydratase.